Consider the following 188-residue polypeptide: RWD domain-containing protein 4 (188 aa).

Positions 9–111 constitute an RWD domain; the sequence is MELEALRSIY…EYAKDNKEQF (103 aa). The interval 132 to 167 is disordered; sequence TPSAAPSSKKKDKKEQLSKAQKRKLADKTDHKGELP. Positions 155-166 are enriched in basic and acidic residues; sequence KLADKTDHKGEL.

This is RWD domain-containing protein 4 (Rwdd4) from Rattus norvegicus (Rat).